The primary structure comprises 826 residues: Sister chromatid cohesion protein PDS5 homolog D (826 aa).

HEAT repeat units follow at residues 18 to 54 (GTNLLSPPSSTDDLLTLLDETESLLKNVEQDQPLSMQ), 55 to 94 (SALIPSRNALVSVDLLSHPDSDVRVSVVSCLTEIVRITAP), 151 to 188 (DLILQMFRNFFKFIRSDHPQLVFSSMELIMIAIIDETE), 189 to 226 (QVSTDLLDSLLATVKKENQNVSPMSWSLAEKVLSRCAR), and 230 to 267 (PYIIEALKSRGTSLDMYSPVVSSICQSVFNTPKVHSPV). Disordered regions lie at residues 261 to 551 (PKVH…EVES) and 640 to 826 (KKSK…KRKS). 2 stretches are compositionally biased toward basic and acidic residues: residues 269 to 286 (TKEHEEKLDLGHSRKENL) and 296 to 309 (RHETRGINEKEKVR). Positions 281 to 288 (SRKENLSK) match the Nuclear localization signal 1 motif. The span at 311 to 323 (GNKSSLLKQSLKQ) shows a compositional bias: polar residues. The Nuclear localization signal 2 signature appears at 357–364 (GKRDPLKT). Over residues 396-408 (SPATSSRSLTGSL) the composition is skewed to polar residues. Residues 424–461 (SLSSPRLKKLASCFRDEEPNQEDDRKIGNSSKQTRSKN) form an HEAT 6 repeat. A compositionally biased stretch (basic and acidic residues) spans 437-450 (FRDEEPNQEDDRKI). The span at 451–460 (GNSSKQTRSK) shows a compositional bias: polar residues. Low complexity predominate over residues 644–663 (NVAVSVEPTSSSGVRSSSRT). Residues 665–701 (MKKDCGKRLNKQVEKTREGKNLRSLKELNAETDRTAE) are compositionally biased toward basic and acidic residues. Positions 702-724 (EQEVSLEAESDDRSEEQEYEDDC) are enriched in acidic residues. Residues 725-746 (SDKKEQSQDKGVEAETKEEEKQ) show a composition bias toward basic and acidic residues. 3 stretches are compositionally biased toward acidic residues: residues 752-763 (GESEGEDSESEE), 771-800 (DDMEDDEEEEEEEIDHMEDEAEEEKEEVDD), and 811-826 (EKEEEEEEEDEEKRKS). Positions 770–825 (TDDMEDDEEEEEEEIDHMEDEAEEEKEEVDDKEASANMSEIEKEEEEEEEDEEKRK) form a coiled coil.

It belongs to the PDS5 family. Interacts with the cohesin complex.

It localises to the nucleus. In terms of biological role, cohesin cofactor dispensable during the meiotic division but playing an important role in DNA repair by homologous recombination (HR) probably by helping SMC5/SMC6 complex. Regulator of sister chromatid cohesion in mitosis which may stabilize cohesin complex association with chromatin. May couple sister chromatid cohesion during mitosis to DNA replication. Cohesion ensures that chromosome partitioning is accurate in both meiotic and mitotic cells and plays an important role in DNA repair. The sequence is that of Sister chromatid cohesion protein PDS5 homolog D from Arabidopsis thaliana (Mouse-ear cress).